We begin with the raw amino-acid sequence, 98 residues long: Large ribosomal subunit protein uL23 (98 aa).

It belongs to the universal ribosomal protein uL23 family. Part of the 50S ribosomal subunit. Contacts protein L29, and trigger factor when it is bound to the ribosome.

Functionally, one of the early assembly proteins it binds 23S rRNA. One of the proteins that surrounds the polypeptide exit tunnel on the outside of the ribosome. Forms the main docking site for trigger factor binding to the ribosome. The chain is Large ribosomal subunit protein uL23 from Chromohalobacter salexigens (strain ATCC BAA-138 / DSM 3043 / CIP 106854 / NCIMB 13768 / 1H11).